Reading from the N-terminus, the 482-residue chain is MKFIIKLFPEITIKSQSVRLRFIKILTGNIRNVLKHYDETLAVVRHWDNIEVRAKDENQRLAIRDALTRIPGIHHILEVEDVPFTDMHDIFEKALAQYREQLEGKTFCVRVKRRGKHEFSSIEVERYVGGGLNQHIESARVKLTNPDVTVHLEVEDDRLLLIKGRYEGIGGFPIGTQEDVLSLISGGFDSGVSSYMLMRRGCRVHYCFFNLGGAAHEIGVRQVAHYLWNRFGSSHRVRFVAINFEPVVGEILEKVDDGQMGVVLKRMMVRAASKVAERYGVQALVTGEALGQVSSQTLTNLRLIDNVSDTLILRPLISYDKEHIINLARQIGTEDFARTMPEYCGVISKSPTVKAIKAKIEAEEENFDFSILDKVVEEANNVDIREIAQQTQQEVVEVETVSGFGANDVILDIRSVDEQDDKPLKVEGVDVVSLPFYKLSTKFGDLDQSKTWLLWCERGVMSRLQALYLREQGFANVKVYRP.

Residues Leu-61–Arg-165 form the THUMP domain. Residues Leu-183–Ile-184, Lys-265, Gly-287, and Gln-296 contribute to the ATP site. A disulfide bridge links Cys-344 with Cys-456. Residues Phe-404–Pro-482 form the Rhodanese domain. The active-site Cysteine persulfide intermediate is the Cys-456.

This sequence belongs to the ThiI family.

The protein localises to the cytoplasm. It catalyses the reaction [ThiI sulfur-carrier protein]-S-sulfanyl-L-cysteine + a uridine in tRNA + 2 reduced [2Fe-2S]-[ferredoxin] + ATP + H(+) = [ThiI sulfur-carrier protein]-L-cysteine + a 4-thiouridine in tRNA + 2 oxidized [2Fe-2S]-[ferredoxin] + AMP + diphosphate. It carries out the reaction [ThiS sulfur-carrier protein]-C-terminal Gly-Gly-AMP + S-sulfanyl-L-cysteinyl-[cysteine desulfurase] + AH2 = [ThiS sulfur-carrier protein]-C-terminal-Gly-aminoethanethioate + L-cysteinyl-[cysteine desulfurase] + A + AMP + 2 H(+). The protein operates within cofactor biosynthesis; thiamine diphosphate biosynthesis. Catalyzes the ATP-dependent transfer of a sulfur to tRNA to produce 4-thiouridine in position 8 of tRNAs, which functions as a near-UV photosensor. Also catalyzes the transfer of sulfur to the sulfur carrier protein ThiS, forming ThiS-thiocarboxylate. This is a step in the synthesis of thiazole, in the thiamine biosynthesis pathway. The sulfur is donated as persulfide by IscS. The sequence is that of tRNA sulfurtransferase from Salmonella agona (strain SL483).